The chain runs to 150 residues: Major facilitator superfamily domain-containing 14C pseudogene (150 aa).

The segment at 1-25 is disordered; that stretch reads MSVEPPPELEEKAASEPEAGAMPEK. Residues 1–49 lie on the Extracellular side of the membrane; that stretch reads MSVEPPPELEEKAASEPEAGAMPEKRAGAQAAGSTWLQGFGPPSVYHAA. A helical membrane pass occupies residues 50–70; that stretch reads IVIFLEFFAWGLLTTPMLTVL. Topologically, residues 71–82 are cytoplasmic; that stretch reads HETFSQHTFLMN. The helical transmembrane segment at 83–103 threads the bilayer; the sequence is GLIQGVKGLLSFLSAPLIGAL. The Extracellular portion of the chain corresponds to 104–111; the sequence is SDVWGRKP. A helical transmembrane segment spans residues 112–132; the sequence is FLLGTVFFTCFPIPLMRISPC. The Cytoplasmic segment spans residues 133–150; the sequence is RVWWRAPVVPATCGRRMA.

It belongs to the major facilitator superfamily.

The protein resides in the membrane. This is Major facilitator superfamily domain-containing 14C pseudogene from Homo sapiens (Human).